Reading from the N-terminus, the 395-residue chain is MGILGLSKLLYDKSPNAIREQELKNFFGRRIAIDASMSIYQFIIAMKGFQDGQGLELTNEKGDVTSHLNGLFARTLRMIDEGIKPIYVFDGKPPKLKADELEMRRQKAAEAEREFEKAKDAGDDEMMEKMSKRTVRVSRDQIDESKKLLRLMGIPVIQAPSEAEAQCAELVKKGKAWAVGTEDMDALTFGSTVMLRHLNISDAKKRPIAEIHLDEVLQITGLSMGQFVDLCILLGCDYVPKVPGIGPQKAWEGIQRYGSIESFLESLDTTKHPVPADFYYKEARAFFQNPEVTPAEEINIQFSEPDEVGLIQFLVKEKLFNPDRVNKGIARLRAALTRKTQGRLDSFFTVTKVPQQTAAARAPLAGTKRPRDGKYVHVSGTLRKATSGHKKAVKK.

The interval 1–108 (MGILGLSKLL…DELEMRRQKA (108 aa)) is N-domain. Asp34 is a Mg(2+) binding site. A DNA-binding site is contributed by Arg74. The Mg(2+) site is built by Asp90, Glu162, Glu164, Asp183, and Asp185. Residues 126-257 (MMEKMSKRTV…QKAWEGIQRY (132 aa)) are I-domain. Residue Glu162 coordinates DNA. Positions 235 and 237 each coordinate DNA. Residue Asp237 coordinates Mg(2+). Residues 340-348 (TQGRLDSFF) form an interaction with PCNA region.

The protein belongs to the XPG/RAD2 endonuclease family. FEN1 subfamily. Interacts with PCNA. Three molecules of FEN1 bind to one PCNA trimer with each molecule binding to one PCNA monomer. PCNA stimulates the nuclease activity without altering cleavage specificity. Requires Mg(2+) as cofactor. Phosphorylated. Phosphorylation upon DNA damage induces relocalization to the nuclear plasma.

Its subcellular location is the nucleus. It localises to the nucleolus. The protein localises to the nucleoplasm. The protein resides in the mitochondrion. In terms of biological role, structure-specific nuclease with 5'-flap endonuclease and 5'-3' exonuclease activities involved in DNA replication and repair. During DNA replication, cleaves the 5'-overhanging flap structure that is generated by displacement synthesis when DNA polymerase encounters the 5'-end of a downstream Okazaki fragment. It enters the flap from the 5'-end and then tracks to cleave the flap base, leaving a nick for ligation. Also involved in the long patch base excision repair (LP-BER) pathway, by cleaving within the apurinic/apyrimidinic (AP) site-terminated flap. Acts as a genome stabilization factor that prevents flaps from equilibrating into structures that lead to duplications and deletions. Also possesses 5'-3' exonuclease activity on nicked or gapped double-stranded DNA, and exhibits RNase H activity. Also involved in replication and repair of rDNA and in repairing mitochondrial DNA. The protein is Flap endonuclease 1 of Leishmania infantum.